A 395-amino-acid polypeptide reads, in one-letter code: Chorismate synthase (395 aa).

NADP(+)-binding residues include arginine 40 and arginine 46. Residues 135–137 and 256–257 contribute to the FMN site; these read RAS and QA. Residues 272 to 283 are compositionally biased toward basic and acidic residues; it reads RRGSQAHDEMRP. The segment at 272 to 296 is disordered; it reads RRGSQAHDEMRPGPDGILRSTNRAG. FMN contacts are provided by residues glycine 300, 315–319, and arginine 341; that span reads KPIST.

The protein belongs to the chorismate synthase family. As to quaternary structure, homotetramer. Requires FMNH2 as cofactor.

The catalysed reaction is 5-O-(1-carboxyvinyl)-3-phosphoshikimate = chorismate + phosphate. Its pathway is metabolic intermediate biosynthesis; chorismate biosynthesis; chorismate from D-erythrose 4-phosphate and phosphoenolpyruvate: step 7/7. In terms of biological role, catalyzes the anti-1,4-elimination of the C-3 phosphate and the C-6 proR hydrogen from 5-enolpyruvylshikimate-3-phosphate (EPSP) to yield chorismate, which is the branch point compound that serves as the starting substrate for the three terminal pathways of aromatic amino acid biosynthesis. This reaction introduces a second double bond into the aromatic ring system. This chain is Chorismate synthase, found in Rhodococcus jostii (strain RHA1).